We begin with the raw amino-acid sequence, 21 residues long: Histone H2B 1 (21 aa).

The segment at methionine 1–alanine 21 is disordered. 2 positions are modified to N6-acetyllysine: lysine 6 and lysine 11. The span at alanine 8–alanine 21 shows a compositional bias: basic residues. Residue serine 13 is modified to Phosphoserine. Residues lysine 14 and lysine 19 each carry the N6-acetyllysine modification. Lysine 19 is covalently cross-linked (Glycyl lysine isopeptide (Lys-Gly) (interchain with G-Cter in ubiquitin)).

The protein belongs to the histone H2B family. As to quaternary structure, the nucleosome is a histone octamer containing two molecules each of H2A, H2B, H3 and H4 assembled in one H3-H4 heterotetramer and two H2A-H2B heterodimers. The octamer wraps approximately 147 bp of DNA. Monoubiquitination at the C-terminal Lys gives a specific tag for epigenetic transcriptional activation and is also prerequisite for histone H3 'Lys-4' and 'Lys-79' methylation. In terms of processing, phosphorylated during apoptosis; which facilitates apoptotic chromatin condensation.

The protein resides in the nucleus. It is found in the chromosome. In terms of biological role, core component of nucleosome. Nucleosomes wrap and compact DNA into chromatin, limiting DNA accessibility to the cellular machineries which require DNA as a template. Histones thereby play a central role in transcription regulation, DNA repair, DNA replication and chromosomal stability. DNA accessibility is regulated via a complex set of post-translational modifications of histones, also called histone code, and nucleosome remodeling. Its function is as follows. Has broad-spectrum antimicrobial and antibacterial activity. It is important in the antimicrobial defenses of fish skin and possesses strong activity against saprolegnia, the most common fungal infection in fish. It is also inhibitory to fish bacterial pathogens, such as aeromonas hydrophila, vibrio alginolyticus and E.coli D31. This is Histone H2B 1 from Ictalurus punctatus (Channel catfish).